The sequence spans 305 residues: Tyrosine recombinase XerD (305 aa).

Residues 1 to 83 enclose the Core-binding (CB) domain; it reads MEFISQFLEM…TIKSYYEFLI (83 aa). Residues 104–298 form the Tyr recombinase domain; the sequence is KLPEILSIDD…QTNHLKKALL (195 aa). Active-site residues include Arg145, Lys175, His250, Arg253, and His276. Tyr285 (O-(3'-phospho-DNA)-tyrosine intermediate) is an active-site residue.

Belongs to the 'phage' integrase family. XerD subfamily. Forms a cyclic heterotetrameric complex composed of two molecules of XerC and two molecules of XerD.

The protein resides in the cytoplasm. Site-specific tyrosine recombinase, which acts by catalyzing the cutting and rejoining of the recombining DNA molecules. The XerC-XerD complex is essential to convert dimers of the bacterial chromosome into monomers to permit their segregation at cell division. It also contributes to the segregational stability of plasmids. The protein is Tyrosine recombinase XerD of Rickettsia bellii (strain RML369-C).